A 254-amino-acid chain; its full sequence is Uracil-DNA glycosylase (254 aa).

The Proton acceptor role is filled by D78.

The protein belongs to the uracil-DNA glycosylase (UDG) superfamily. UNG family.

Its subcellular location is the cytoplasm. It catalyses the reaction Hydrolyzes single-stranded DNA or mismatched double-stranded DNA and polynucleotides, releasing free uracil.. Functionally, excises uracil residues from the DNA which can arise as a result of misincorporation of dUMP residues by DNA polymerase or due to deamination of cytosine. The sequence is that of Uracil-DNA glycosylase from Bordetella petrii (strain ATCC BAA-461 / DSM 12804 / CCUG 43448).